The chain runs to 767 residues: Transferrin receptor protein 1 (767 aa).

Residues 1–67 (MDQARSAFSN…LTKPKRFNGS (67 aa)) lie on the Cytoplasmic side of the membrane. Residues Ser9 and Ser18 each carry the phosphoserine modification. Tyr19 bears the Phosphotyrosine mark. The short motif at 19-22 (YTRF) is the Endocytosis signal element. Thr20 bears the Phosphothreonine mark. Phosphoserine is present on Ser23. The Stop-transfer sequence signature appears at 60-63 (KPKR). The chain crosses the membrane as a helical; Signal-anchor for type II membrane protein span at residues 68–88 (FCYAVIAVIIFFLIGFMIGYL). Residue Cys69 is the site of S-palmitoyl cysteine attachment. Residues 89 to 767 (GYCKRVEPKS…GDIWDIDNEF (679 aa)) are Extracellular-facing. Residues 96-110 (PKSECGRSGDSKEIE) are compositionally biased toward basic and acidic residues. Residues 96-122 (PKSECGRSGDSKEIEGTEPPETEEYFP) are disordered. Residues 111-121 (GTEPPETEEYF) are compositionally biased toward acidic residues. 3 N-linked (GlcNAc...) asparagine glycosylation sites follow: Asn211, Asn258, and Asn324. Positions 230–320 (SKATTVTGKL…GTGDPYTPGF (91 aa)) constitute a PA domain. The tract at residues 576-767 (TMDTYEVLSQ…GDIWDIDNEF (192 aa)) is ligand-binding. Residues 653–655 (RGD) carry the Cell attachment site motif. Asn734 carries N-linked (GlcNAc...) asparagine glycosylation.

This sequence belongs to the peptidase M28 family. M28B subfamily. As to quaternary structure, homodimer; disulfide-linked. Binds one transferrin or HFE molecule per subunit. Interacts with SH3BP4. Interacts with STEAP3; facilitates TFRC endocytosis in erythroid precursor cells. Post-translationally, stearoylated by ZDHHC6 which inhibits TFRC-mediated activation of the JNK pathway and promotes mitochondrial fragmentation. Stearoylation does not affect iron uptake.

It localises to the cell membrane. The protein localises to the melanosome. Its function is as follows. Cellular uptake of iron occurs via receptor-mediated endocytosis of ligand-occupied transferrin receptor into specialized endosomes. Endosomal acidification leads to iron release. The apotransferrin-receptor complex is then recycled to the cell surface with a return to neutral pH and the concomitant loss of affinity of apotransferrin for its receptor. Transferrin receptor is necessary for development of erythrocytes and the nervous system. Positively regulates T and B cell proliferation through iron uptake. Acts as a lipid sensor that regulates mitochondrial fusion by regulating activation of the JNK pathway. When dietary levels of stearate (C18:0) are low, promotes activation of the JNK pathway, resulting in HUWE1-mediated ubiquitination and subsequent degradation of the mitofusin MFN2 and inhibition of mitochondrial fusion. When dietary levels of stearate (C18:0) are high, TFRC stearoylation inhibits activation of the JNK pathway and thus degradation of the mitofusin MFN2. Mediates uptake of NICOL1 into fibroblasts where it may regulate extracellular matrix production. The sequence is that of Transferrin receptor protein 1 (TFRC) from Equus caballus (Horse).